We begin with the raw amino-acid sequence, 398 residues long: Maltoporin (398 aa).

An N-terminal signal peptide occupies residues 1–30 (MTDKNNKRLFKVAPLATAIAASLFTVNASA).

The protein belongs to the porin LamB (TC 1.B.3) family. As to quaternary structure, homotrimer formed of three 18-stranded antiparallel beta-barrels, containing three independent channels.

The protein resides in the cell outer membrane. The enzyme catalyses beta-maltose(in) = beta-maltose(out). Involved in the transport of maltose and maltodextrins. This chain is Maltoporin, found in Hahella chejuensis (strain KCTC 2396).